Reading from the N-terminus, the 244-residue chain is Uridylate kinase (244 aa).

17 to 20 lines the ATP pocket; it reads KVSG. The tract at residues 25–30 is involved in allosteric activation by GTP; that stretch reads GEKGFG. A UMP-binding site is contributed by glycine 59. The ATP site is built by glycine 60 and arginine 64. Residues aspartate 80 and 141–148 each bind UMP; that span reads VGNPFFTT. Positions 168, 169, 174, and 177 each coordinate ATP.

Belongs to the UMP kinase family. Homohexamer.

Its subcellular location is the cytoplasm. It catalyses the reaction UMP + ATP = UDP + ADP. Its pathway is pyrimidine metabolism; CTP biosynthesis via de novo pathway; UDP from UMP (UMPK route): step 1/1. Its activity is regulated as follows. Allosterically activated by GTP. Inhibited by UTP. Catalyzes the reversible phosphorylation of UMP to UDP. In Ehrlichia canis (strain Jake), this protein is Uridylate kinase.